A 147-amino-acid polypeptide reads, in one-letter code: Hemoglobin subunit beta-2 (147 aa).

A Globin domain is found at 3-147; the sequence is HWTAEEKATI…LVAALSHGYF (145 aa). Heme b-binding residues include His64 and His93.

Belongs to the globin family. In terms of assembly, heterotetramer of two alpha chains and two beta chains. As to expression, red blood cells.

Functionally, this is a larval (tadpole) beta-globin. In Xenopus tropicalis (Western clawed frog), this protein is Hemoglobin subunit beta-2 (hbb2).